Consider the following 569-residue polypeptide: CTP synthase (569 aa).

Residues 1–272 (MARPKNVKHI…DSRVLKKLGI (272 aa)) form an amidoligase domain region. Serine 18 contributes to the CTP binding site. Residue serine 18 participates in UTP binding. ATP is bound at residue 19 to 24 (SLGKGI). Tyrosine 59 provides a ligand contact to L-glutamine. ATP is bound at residue aspartate 76. Mg(2+) is bound by residues aspartate 76 and glutamate 146. CTP-binding positions include 153 to 155 (DIE), 193 to 198 (KTKPTQ), and lysine 229. UTP is bound by residues 193–198 (KTKPTQ) and lysine 229. One can recognise a Glutamine amidotransferase type-1 domain in the interval 299 to 543 (TIGICGKYTE…VAAAKDYARG (245 aa)). Glycine 363 contributes to the L-glutamine binding site. The Nucleophile; for glutamine hydrolysis role is filled by cysteine 390. Residues 391-394 (LGMQ), glutamate 414, and arginine 471 contribute to the L-glutamine site. Catalysis depends on residues histidine 516 and glutamate 518.

Belongs to the CTP synthase family. In terms of assembly, homotetramer.

It carries out the reaction UTP + L-glutamine + ATP + H2O = CTP + L-glutamate + ADP + phosphate + 2 H(+). The catalysed reaction is L-glutamine + H2O = L-glutamate + NH4(+). It catalyses the reaction UTP + NH4(+) + ATP = CTP + ADP + phosphate + 2 H(+). It participates in pyrimidine metabolism; CTP biosynthesis via de novo pathway; CTP from UDP: step 2/2. Allosterically activated by GTP, when glutamine is the substrate; GTP has no effect on the reaction when ammonia is the substrate. The allosteric effector GTP functions by stabilizing the protein conformation that binds the tetrahedral intermediate(s) formed during glutamine hydrolysis. Inhibited by the product CTP, via allosteric rather than competitive inhibition. Functionally, catalyzes the ATP-dependent amination of UTP to CTP with either L-glutamine or ammonia as the source of nitrogen. Regulates intracellular CTP levels through interactions with the four ribonucleotide triphosphates. In Chlorobium chlorochromatii (strain CaD3), this protein is CTP synthase.